We begin with the raw amino-acid sequence, 426 residues long: Glutamyl-tRNA reductase (426 aa).

Substrate contacts are provided by residues T49–R52, S109, E114–Q116, and Q120. C50 (nucleophile) is an active-site residue. G189–G194 contacts NADP(+).

The protein belongs to the glutamyl-tRNA reductase family. Homodimer.

The catalysed reaction is (S)-4-amino-5-oxopentanoate + tRNA(Glu) + NADP(+) = L-glutamyl-tRNA(Glu) + NADPH + H(+). It participates in porphyrin-containing compound metabolism; protoporphyrin-IX biosynthesis; 5-aminolevulinate from L-glutamyl-tRNA(Glu): step 1/2. Its pathway is porphyrin-containing compound metabolism; chlorophyll biosynthesis. Catalyzes the NADPH-dependent reduction of glutamyl-tRNA(Glu) to glutamate 1-semialdehyde (GSA). This Prosthecochloris aestuarii (strain DSM 271 / SK 413) protein is Glutamyl-tRNA reductase.